We begin with the raw amino-acid sequence, 382 residues long: Dual-specificity RNA methyltransferase RlmN (382 aa).

Residue Glu94 is the Proton acceptor of the active site. One can recognise a Radical SAM core domain in the interval 100-336; that stretch reads EANRGTLCVS…NTITRKTRGD (237 aa). Cys107 and Cys342 are joined by a disulfide. The [4Fe-4S] cluster site is built by Cys114, Cys118, and Cys121. S-adenosyl-L-methionine is bound by residues 168-169, Ser200, 222-224, and Asn299; these read GE and SLH. Residue Cys342 is the S-methylcysteine intermediate of the active site.

This sequence belongs to the radical SAM superfamily. RlmN family. [4Fe-4S] cluster is required as a cofactor.

The protein resides in the cytoplasm. It catalyses the reaction adenosine(2503) in 23S rRNA + 2 reduced [2Fe-2S]-[ferredoxin] + 2 S-adenosyl-L-methionine = 2-methyladenosine(2503) in 23S rRNA + 5'-deoxyadenosine + L-methionine + 2 oxidized [2Fe-2S]-[ferredoxin] + S-adenosyl-L-homocysteine. It carries out the reaction adenosine(37) in tRNA + 2 reduced [2Fe-2S]-[ferredoxin] + 2 S-adenosyl-L-methionine = 2-methyladenosine(37) in tRNA + 5'-deoxyadenosine + L-methionine + 2 oxidized [2Fe-2S]-[ferredoxin] + S-adenosyl-L-homocysteine. In terms of biological role, specifically methylates position 2 of adenine 2503 in 23S rRNA and position 2 of adenine 37 in tRNAs. m2A2503 modification seems to play a crucial role in the proofreading step occurring at the peptidyl transferase center and thus would serve to optimize ribosomal fidelity. The sequence is that of Dual-specificity RNA methyltransferase RlmN from Legionella pneumophila (strain Lens).